We begin with the raw amino-acid sequence, 638 residues long: Outer dense fiber protein 2 (638 aa).

At threonine 73 the chain carries Phosphothreonine. Phosphoserine; by TSSK4 is present on serine 76. A phosphoserine mark is found at serine 87 and serine 90. Threonine 91 carries the phosphothreonine modification. Serine 96 and serine 110 each carry phosphoserine. Residue lysine 119 forms a Glycyl lysine isopeptide (Lys-Gly) (interchain with G-Cter in SUMO2) linkage. Serine 120 bears the Phosphoserine mark. Residues glutamine 125–aspartate 198 are a coiled coil. A Phosphothreonine modification is found at threonine 212. Coiled coils occupy residues aspartate 226–leucine 404 and glutamate 442–arginine 616. Position 242 is a phosphoserine (serine 242). Residues lysine 373–lysine 396 are disordered. Residue serine 613 is modified to Phosphoserine.

The protein belongs to the ODF2 family. Self-associates. Associates with microtubules and forms a fibrillar structure partially linked to the microtubule network. Interacts via its C-terminus with PLK1. Interacts with ODF1. Localized at the distal/subdistal appendages of mother centrioles. Interacts with MARK4; the interaction is required for localization of ODF2 to centrioles. Interacts with TSSK4. Interacts with AKNA. Interacts with QRICH2. Interacts with CFAP58. Interacts with BBOF1. Interacts with CCDC38. Interacts with CCDC42. Tyrosine phosphorylated. Phosphorylated on Ser-76 by TSSK4.

It is found in the cytoplasm. The protein resides in the cytoskeleton. Its subcellular location is the microtubule organizing center. It localises to the centrosome. The protein localises to the cell projection. It is found in the cilium. The protein resides in the centriole. Its subcellular location is the spindle pole. It localises to the flagellum. In terms of biological role, seems to be a major component of sperm tail outer dense fibers (ODF). ODFs are filamentous structures located on the outside of the axoneme in the midpiece and principal piece of the mammalian sperm tail and may help to maintain the passive elastic structures and elastic recoil of the sperm tail. May have a modulating influence on sperm motility. Functions as a general scaffold protein that is specifically localized at the distal/subdistal appendages of mother centrioles. Component of the centrosome matrix required for the localization of PLK1 and NIN to the centrosomes. Required for the formation and/or maintenance of normal CETN1 assembly. This chain is Outer dense fiber protein 2 (ODF2), found in Macaca fascicularis (Crab-eating macaque).